The following is a 555-amino-acid chain: Putative polyketide hydroxylase (555 aa).

Residues 16-45 and 303-313 each bind FAD; these read PVLVVGGSLVGLSTSVFLGRLGVRHMLVER and YRAGRVFLAGD. The interval 366–395 is disordered; that stretch reads ATTARAAARSAEHSHPGFAPPPGTSGGPQG.

It belongs to the PheA/TfdB FAD monooxygenase family. The cofactor is FAD.

Involved in developmentally regulated synthesis of a compound biosynthetically related to polyketide antibiotics which is essential for spore color in Streptomyces halstedii. The protein is Putative polyketide hydroxylase (schC) of Streptomyces halstedii.